A 566-amino-acid chain; its full sequence is Proline--tRNA ligase (566 aa).

It belongs to the class-II aminoacyl-tRNA synthetase family. ProS type 1 subfamily. As to quaternary structure, homodimer.

It is found in the cytoplasm. It carries out the reaction tRNA(Pro) + L-proline + ATP = L-prolyl-tRNA(Pro) + AMP + diphosphate. Functionally, catalyzes the attachment of proline to tRNA(Pro) in a two-step reaction: proline is first activated by ATP to form Pro-AMP and then transferred to the acceptor end of tRNA(Pro). As ProRS can inadvertently accommodate and process non-cognate amino acids such as alanine and cysteine, to avoid such errors it has two additional distinct editing activities against alanine. One activity is designated as 'pretransfer' editing and involves the tRNA(Pro)-independent hydrolysis of activated Ala-AMP. The other activity is designated 'posttransfer' editing and involves deacylation of mischarged Ala-tRNA(Pro). The misacylated Cys-tRNA(Pro) is not edited by ProRS. This is Proline--tRNA ligase from Coxiella burnetii (strain RSA 493 / Nine Mile phase I).